The sequence spans 314 residues: DNA-directed RNA polymerase subunit alpha (314 aa).

The segment at 1 to 227 (MTYFQIECVE…SLFYPLTNLN (227 aa)) is alpha N-terminal domain (alpha-NTD). Residues 239 to 314 (EEEINQVLIE…LPKEKNIQNT (76 aa)) are alpha C-terminal domain (alpha-CTD).

Belongs to the RNA polymerase alpha chain family. In plastids the minimal PEP RNA polymerase catalytic core is composed of four subunits: alpha, beta, beta', and beta''. When a (nuclear-encoded) sigma factor is associated with the core the holoenzyme is formed, which can initiate transcription.

It localises to the plastid. The protein resides in the chloroplast. The catalysed reaction is RNA(n) + a ribonucleoside 5'-triphosphate = RNA(n+1) + diphosphate. DNA-dependent RNA polymerase catalyzes the transcription of DNA into RNA using the four ribonucleoside triphosphates as substrates. This is DNA-directed RNA polymerase subunit alpha from Gracilaria tenuistipitata var. liui (Red alga).